Here is a 306-residue protein sequence, read N- to C-terminus: D-alanine--D-alanine ligase (306 aa).

The region spanning 101-303 (KLVWQALGLP…FSQLVARILM (203 aa)) is the ATP-grasp domain. 134–189 (VAKLGLPLIVKPSHEGSSVGMSKVDHASELQKALVEAFQHDSDVLIEKWLSGPEFT) lines the ATP pocket. 3 residues coordinate Mg(2+): D257, E270, and N272.

This sequence belongs to the D-alanine--D-alanine ligase family. It depends on Mg(2+) as a cofactor. The cofactor is Mn(2+).

It localises to the cytoplasm. The enzyme catalyses 2 D-alanine + ATP = D-alanyl-D-alanine + ADP + phosphate + H(+). The protein operates within cell wall biogenesis; peptidoglycan biosynthesis. Its function is as follows. Cell wall formation. The polypeptide is D-alanine--D-alanine ligase (Yersinia pseudotuberculosis serotype O:1b (strain IP 31758)).